A 264-amino-acid chain; its full sequence is Thymidylate synthase (264 aa).

Arg21 is a dUMP binding site. A (6R)-5,10-methylene-5,6,7,8-tetrahydrofolate-binding site is contributed by His51. 126 to 127 (RR) is a dUMP binding site. The active-site Nucleophile is Cys146. DUMP contacts are provided by residues 166–169 (RSCD), Asn177, and 207–209 (HLY). Asp169 contributes to the (6R)-5,10-methylene-5,6,7,8-tetrahydrofolate binding site. A (6R)-5,10-methylene-5,6,7,8-tetrahydrofolate-binding site is contributed by Ala263.

This sequence belongs to the thymidylate synthase family. Bacterial-type ThyA subfamily. Homodimer.

It is found in the cytoplasm. It carries out the reaction dUMP + (6R)-5,10-methylene-5,6,7,8-tetrahydrofolate = 7,8-dihydrofolate + dTMP. It functions in the pathway pyrimidine metabolism; dTTP biosynthesis. Catalyzes the reductive methylation of 2'-deoxyuridine-5'-monophosphate (dUMP) to 2'-deoxythymidine-5'-monophosphate (dTMP) while utilizing 5,10-methylenetetrahydrofolate (mTHF) as the methyl donor and reductant in the reaction, yielding dihydrofolate (DHF) as a by-product. This enzymatic reaction provides an intracellular de novo source of dTMP, an essential precursor for DNA biosynthesis. The chain is Thymidylate synthase from Salmonella typhimurium (strain LT2 / SGSC1412 / ATCC 700720).